The following is a 209-amino-acid chain: MMRTNAGKETKGYNPAPADSGVPRKCVIIRKKKVGENMEKIELRYVAYSRIDKGSRSTTMEAINHAAAYFRERAGDLDYQDEPSSKSTCQKTFTVVKSEEKEKKKLEQCLPILLNIRARFAENEKNKSYSIHKRNQNGALKALCDEIVEESTYVLNNGHPVSSDLIKKIANINTLSRQVIANETKMENLVQDEFELAASKSKTSDKVSK.

Residues 1 to 11 (MMRTNAGKETK) show a composition bias toward basic and acidic residues. Residues 1–20 (MMRTNAGKETKGYNPAPADS) form a disordered region.

This is an uncharacterized protein from Caenorhabditis elegans.